A 174-amino-acid chain; its full sequence is MAKYQCPDCEYIYDEVAGHPHEGFPPGTSWETIPEEWACPDCAVRDKADFVVIESGSASPASGAATPEVRTATTPPKAEASPQKSTGASTPSANNKAKAKAKAKPARAKSSKDSTGKETTFRKWICITCGHIYDEALGDETEGFAPGTLFEDIPDDWCCPDCGATKEDYVLHED.

Residues 1 to 53 (MAKYQCPDCEYIYDEVAGHPHEGFPPGTSWETIPEEWACPDCAVRDKADFVVI) form the Rubredoxin-like 1 domain. Residues Cys-6, Cys-9, Cys-39, and Cys-42 each coordinate Fe cation. A compositionally biased stretch (low complexity) spans 56-65 (GSASPASGAA). Positions 56 to 115 (GSASPASGAATPEVRTATTPPKAEASPQKSTGASTPSANNKAKAKAKAKPARAKSSKDST) are disordered. The span at 97–109 (AKAKAKAKPARAK) shows a compositional bias: basic residues. The Rubredoxin-like 2 domain occupies 121 to 172 (FRKWICITCGHIYDEALGDETEGFAPGTLFEDIPDDWCCPDCGATKEDYVLH). Positions 126, 129, 159, and 162 each coordinate Fe cation.

Belongs to the rubredoxin family. It depends on Fe(3+) as a cofactor.

It is found in the cytoplasm. Its pathway is hydrocarbon metabolism; alkane degradation. Its function is as follows. Involved in the hydrocarbon hydroxylating system, which transfers electrons from NADH to rubredoxin reductase and then through rubredoxin to alkane 1 monooxygenase. The protein is Rubredoxin-2 (alkG) of Alcanivorax borkumensis (strain ATCC 700651 / DSM 11573 / NCIMB 13689 / SK2).